A 634-amino-acid polypeptide reads, in one-letter code: Probable potassium transport system protein Kup (634 aa).

12 helical membrane passes run 21-41 (IILSAIGVVFGDIGTSPLYTL), 61-81 (ILSLIFWAMMLVVTIKYVAVI), 110-130 (IYIVGILGIFGTSLFFGDGVI), 148-168 (PHMKAFVVPITLAVLILLFLC), 180-200 (FGPITLLWFIAIGVVGVYNIA), 217-237 (FFLEHGWHSMFVLGAVVLAVT), 258-278 (WMYVVLPMLALNYLGQGALVL), 296-316 (GLYPMIALATAAAVIASQALI), 348-368 (IYVPTVNWTLLTLVILTVIGF), 377-397 (AYGVAVTGTMMITTVLMIIYA), 408-428 (LWMMAIVFIAVDGAFFYANII), and 432-452 (DGAWFPLLLGVVIFTFMRTWL).

Belongs to the HAK/KUP transporter (TC 2.A.72) family.

It is found in the cell inner membrane. The catalysed reaction is K(+)(in) + H(+)(in) = K(+)(out) + H(+)(out). Transport of potassium into the cell. Likely operates as a K(+):H(+) symporter. The sequence is that of Probable potassium transport system protein Kup from Xylella fastidiosa (strain 9a5c).